The chain runs to 267 residues: NAD kinase 2 (267 aa).

Catalysis depends on aspartate 52, which acts as the Proton acceptor. NAD(+) contacts are provided by residues 52–53 (DA), 124–125 (NE), arginine 151, aspartate 153, 164–169 (TAYNKS), and alanine 188.

The protein belongs to the NAD kinase family. A divalent metal cation serves as cofactor.

The protein localises to the cytoplasm. It catalyses the reaction NAD(+) + ATP = ADP + NADP(+) + H(+). Its function is as follows. Involved in the regulation of the intracellular balance of NAD and NADP, and is a key enzyme in the biosynthesis of NADP. Catalyzes specifically the phosphorylation on 2'-hydroxyl of the adenosine moiety of NAD to yield NADP. The sequence is that of NAD kinase 2 from Bacillus cereus (strain ATCC 10987 / NRS 248).